Consider the following 205-residue polypeptide: MMGDKGEKECATASSPIELGCGEGDESGNKSSMRTVETLLRLVPVALCTVSLVVMLKNSQTNDFGSLSYSDLGAFRYLVHANGICAGYSLLSAIFTAMPRPPTMSRAWTFFLLDQVLTYLILAAGAVSTEVVYLAYKGDEAVTWSDACSSFGGFCQKTTASISITFVTVLCYAVLSLISSYKLFSKYDAPICFNGKGIEIAAFHS.

Topologically, residues 1–35 are cytoplasmic; sequence MMGDKGEKECATASSPIELGCGEGDESGNKSSMRT. The chain crosses the membrane as a helical span at residues 36 to 56; the sequence is VETLLRLVPVALCTVSLVVML. The Extracellular portion of the chain corresponds to 57-77; that stretch reads KNSQTNDFGSLSYSDLGAFRY. A helical membrane pass occupies residues 78 to 98; it reads LVHANGICAGYSLLSAIFTAM. The Cytoplasmic segment spans residues 99–106; it reads PRPPTMSR. Residues 107–127 form a helical membrane-spanning segment; the sequence is AWTFFLLDQVLTYLILAAGAV. The Extracellular segment spans residues 128–157; that stretch reads STEVVYLAYKGDEAVTWSDACSSFGGFCQK. Residues 158–178 form a helical membrane-spanning segment; the sequence is TTASISITFVTVLCYAVLSLI. At 179–205 the chain is on the cytoplasmic side; it reads SSYKLFSKYDAPICFNGKGIEIAAFHS.

Belongs to the Casparian strip membrane proteins (CASP) family. In terms of assembly, homodimer and heterodimers.

The protein localises to the cell membrane. The sequence is that of CASP-like protein 2A1 from Vitis vinifera (Grape).